A 306-amino-acid chain; its full sequence is MLSNLPVIFLMGPTAAGKTALAISLCEHLNTEIISVDSALVYKGMDIGTAKPDASELARAPHHLIDLLDPSETYSVADFRRDAIIKIDEFHQQGKVPVLVGGTMLYFKALIDGLSPLPEANVEIRAELEAQAAQYGWPHLYQELVKIDPQAAQKMSENDSQRINRALEVYKLTGKTMTELQKQKQPVLPYTFHQFAIAPTQRSELHQRIEKRFKIMLEQGFENEVSTLYLRKDLHPNMPSIRCVGYRQMWDYLAGEIDHDEMVFRGIAATRQLAKRQLTWLRSWPDVTWLTTGDEENLHRVVSSLS.

An ATP-binding site is contributed by Gly12–Thr19. A substrate-binding site is contributed by Thr14–Thr19. 3 interaction with substrate tRNA regions span residues Asp37–Leu40, Gln161–Arg165, and Arg242–Arg247.

This sequence belongs to the IPP transferase family. Monomer. It depends on Mg(2+) as a cofactor.

The enzyme catalyses adenosine(37) in tRNA + dimethylallyl diphosphate = N(6)-dimethylallyladenosine(37) in tRNA + diphosphate. In terms of biological role, catalyzes the transfer of a dimethylallyl group onto the adenine at position 37 in tRNAs that read codons beginning with uridine, leading to the formation of N6-(dimethylallyl)adenosine (i(6)A). In Pseudoalteromonas translucida (strain TAC 125), this protein is tRNA dimethylallyltransferase.